Consider the following 326-residue polypeptide: D-alanine--D-alanine ligase (326 aa).

An ATP-grasp domain is found at 112–312 (KRIWRFEGLP…YENLCLGILA (201 aa)). Position 138 to 193 (138 to 193 (LQALGAPMIVKPSREGSTIGLTKVWTAEECDQAYVLASRYDPEVLCEEFIEGDETT)) interacts with ATP. Residues aspartate 265, glutamate 279, and asparagine 281 each contribute to the Mg(2+) site.

This sequence belongs to the D-alanine--D-alanine ligase family. Mg(2+) is required as a cofactor. The cofactor is Mn(2+).

The protein resides in the cytoplasm. The enzyme catalyses 2 D-alanine + ATP = D-alanyl-D-alanine + ADP + phosphate + H(+). The protein operates within cell wall biogenesis; peptidoglycan biosynthesis. In terms of biological role, cell wall formation. The polypeptide is D-alanine--D-alanine ligase (Delftia acidovorans (strain DSM 14801 / SPH-1)).